Reading from the N-terminus, the 250-residue chain is NAD(P)H-quinone oxidoreductase subunit K (250 aa).

[4Fe-4S] cluster contacts are provided by cysteine 60, cysteine 61, cysteine 125, and cysteine 156. The interval 230–250 (ELNTSEIDASPASQPSSTYES) is disordered. Polar residues predominate over residues 231 to 250 (LNTSEIDASPASQPSSTYES).

Belongs to the complex I 20 kDa subunit family. In terms of assembly, NDH-1 can be composed of about 15 different subunits; different subcomplexes with different compositions have been identified which probably have different functions. [4Fe-4S] cluster serves as cofactor.

It is found in the cellular thylakoid membrane. It catalyses the reaction a plastoquinone + NADH + (n+1) H(+)(in) = a plastoquinol + NAD(+) + n H(+)(out). It carries out the reaction a plastoquinone + NADPH + (n+1) H(+)(in) = a plastoquinol + NADP(+) + n H(+)(out). Its function is as follows. NDH-1 shuttles electrons from an unknown electron donor, via FMN and iron-sulfur (Fe-S) centers, to quinones in the respiratory and/or the photosynthetic chain. The immediate electron acceptor for the enzyme in this species is believed to be plastoquinone. Couples the redox reaction to proton translocation, and thus conserves the redox energy in a proton gradient. Cyanobacterial NDH-1 also plays a role in inorganic carbon-concentration. This is NAD(P)H-quinone oxidoreductase subunit K from Prochlorococcus marinus (strain MIT 9303).